The primary structure comprises 169 residues: Group 2 truncated hemoglobin 3-2 (169 aa).

His99 is a heme b binding site.

It belongs to the truncated hemoglobin family. Group II subfamily. In terms of assembly, homodimer when ferric.

Functionally, hemoglobin-like protein that exhibits an unusual concentration-independent binding of O(2) and CO. Required for general plant development and during nodulation. May promote shoot organogenesis from root explants. The sequence is that of Group 2 truncated hemoglobin 3-2 from Medicago truncatula (Barrel medic).